The primary structure comprises 117 residues: MAFLMSEFIGLGLAGAGVLSNALLRRQELQLQKQAMENGLVLKADQLGRLGFNPNEVKNVIVGNSFSSNVRLSNMHNDASVVNAYNVYNPASNGIRKKIKSLNNSVKIYNTTGESSV.

It belongs to the lagovirus VP2 protein family. In terms of assembly, homooligomer. The portal-like structure consists in 12 copies of VP2. Interacts with capsid protein VP1.

It localises to the virion. The protein resides in the host cytoplasm. Functionally, minor structural protein that forms a portal-like structure at a unique three-fold axis of symmetry, following binding to the host receptor. The channel formed by VP2 may allow the delivery of the viral genome through the host endosomal membrane. The sequence is that of Minor capsid protein VP2 from Oryctolagus cuniculus (Rabbit).